Reading from the N-terminus, the 274-residue chain is Formamidopyrimidine-DNA glycosylase (274 aa).

P2 serves as the catalytic Schiff-base intermediate with DNA. The active-site Proton donor is E3. The Proton donor; for beta-elimination activity role is filled by K58. Residues H91 and R110 each contribute to the DNA site. The segment at 238 to 272 adopts an FPG-type zinc-finger fold; that stretch reads QVYDKTGQECVRCGTIIEKIQLGGRGTHFCPNCQR. R262 acts as the Proton donor; for delta-elimination activity in catalysis.

Belongs to the FPG family. In terms of assembly, monomer. Requires Zn(2+) as cofactor.

The enzyme catalyses Hydrolysis of DNA containing ring-opened 7-methylguanine residues, releasing 2,6-diamino-4-hydroxy-5-(N-methyl)formamidopyrimidine.. The catalysed reaction is 2'-deoxyribonucleotide-(2'-deoxyribose 5'-phosphate)-2'-deoxyribonucleotide-DNA = a 3'-end 2'-deoxyribonucleotide-(2,3-dehydro-2,3-deoxyribose 5'-phosphate)-DNA + a 5'-end 5'-phospho-2'-deoxyribonucleoside-DNA + H(+). Its function is as follows. Involved in base excision repair of DNA damaged by oxidation or by mutagenic agents. Acts as a DNA glycosylase that recognizes and removes damaged bases. Has a preference for oxidized purines, such as 7,8-dihydro-8-oxoguanine (8-oxoG). Has AP (apurinic/apyrimidinic) lyase activity and introduces nicks in the DNA strand. Cleaves the DNA backbone by beta-delta elimination to generate a single-strand break at the site of the removed base with both 3'- and 5'-phosphates. The sequence is that of Formamidopyrimidine-DNA glycosylase from Streptococcus pneumoniae serotype 4 (strain ATCC BAA-334 / TIGR4).